We begin with the raw amino-acid sequence, 201 residues long: Phosphatidylglycerophosphatase and protein-tyrosine phosphatase 1 (201 aa).

The N-terminal 27 residues, 1-27 (MAATALLEAGLARVLFYPTLLYTLFRG), are a transit peptide targeting the mitochondrion. In terms of domain architecture, Tyrosine-protein phosphatase spans 37-188 (WYHRIDPTVL…LKEFHKQITA (152 aa)). The active-site Phosphocysteine intermediate is the Cys132.

The protein belongs to the protein-tyrosine phosphatase family. Non-receptor class dual specificity subfamily. As to quaternary structure, interacts with STYXL1; the interaction inhibits PTPMT1 catalytic activity.

It is found in the mitochondrion inner membrane. The catalysed reaction is a 1,2-diacyl-sn-glycero-3-phospho-(1'-sn-glycero-3'-phosphate) + H2O = a 1,2-diacyl-sn-glycero-3-phospho-(1'-sn-glycerol) + phosphate. It carries out the reaction O-phospho-L-tyrosyl-[protein] + H2O = L-tyrosyl-[protein] + phosphate. It catalyses the reaction O-phospho-L-seryl-[protein] + H2O = L-seryl-[protein] + phosphate. The enzyme catalyses O-phospho-L-threonyl-[protein] + H2O = L-threonyl-[protein] + phosphate. The catalysed reaction is 1,2-di-(9Z-octadecenoyl)-sn-glycero-3-phospho-(1'-sn-glycerol-3'-phosphate) + H2O = 1,2-di-(9Z-octadecenoyl)-sn-glycero-3-phospho-(1'-sn-glycerol) + phosphate. It carries out the reaction 1,2-dioctanoyl-sn-glycero-3-phospho-(1D-myo-inositol-5-phosphate) + H2O = 1,2-dioctanoyl-sn-glycero-3-phospho-(1D-myo-inositol) + phosphate. It catalyses the reaction a 1-acyl-2-hexanoyl-sn-glycero-3-phospho-(1D-myo-inositol-5-phosphate) + H2O = a 1-acyl-2-hexanoyl-sn-glycero-3-phospho-(1D-myo-inositol) + phosphate. The enzyme catalyses 1,2-dibutyryl-sn-glycero-3-phospho-(1D-myo-inositol-5-phosphate) + H2O = 1,2-dibutyryl-sn-glycero-3-phospho-(1D-myo-inositol) + phosphate. Its pathway is phospholipid metabolism; phosphatidylglycerol biosynthesis; phosphatidylglycerol from CDP-diacylglycerol: step 2/2. Lipid phosphatase which dephosphorylates phosphatidylglycerophosphate (PGP) to phosphatidylglycerol (PG). PGP is an essential intermediate in the biosynthetic pathway of cardiolipin, a mitochondrial-specific phospholipid regulating the membrane integrity and activities of the organelle. Has also been shown to display phosphatase activity toward phosphoprotein substrates, specifically mediates dephosphorylation of mitochondrial proteins, thereby playing an essential role in ATP production. Has probably a preference for proteins phosphorylated on Ser and/or Thr residues compared to proteins phosphorylated on Tyr residues. Probably involved in regulation of insulin secretion in pancreatic beta cells. May prevent intrinsic apoptosis, probably by regulating mitochondrial membrane integrity. In Homo sapiens (Human), this protein is Phosphatidylglycerophosphatase and protein-tyrosine phosphatase 1.